Reading from the N-terminus, the 65-residue chain is Putative potassium channel toxin Ts21 (65 aa).

Positions 1-25 (MNKVYLVAILVLSVLLVANVSPIEG) are cleaved as a signal peptide. 3 cysteine pairs are disulfide-bonded: cysteine 31–cysteine 53, cysteine 38–cysteine 61, and cysteine 42–cysteine 63.

The protein belongs to the short scorpion toxin superfamily. Potassium channel inhibitor family. Alpha-KTx 11 subfamily. Expressed by the venom gland.

It is found in the secreted. Its function is as follows. This recombinant toxin inhibits the mammalian voltage-gated potassium channels Kv1.3/KCNA3 in vitro with an IC(50) of 26.40 nM. The polypeptide is Putative potassium channel toxin Ts21 (Tityus serrulatus (Brazilian scorpion)).